The primary structure comprises 59 residues: Large ribosomal subunit protein uL30 (59 aa).

It belongs to the universal ribosomal protein uL30 family. As to quaternary structure, part of the 50S ribosomal subunit.

This chain is Large ribosomal subunit protein uL30, found in Mycolicibacterium vanbaalenii (strain DSM 7251 / JCM 13017 / BCRC 16820 / KCTC 9966 / NRRL B-24157 / PYR-1) (Mycobacterium vanbaalenii).